Reading from the N-terminus, the 282-residue chain is Bifunctional protein FolD (282 aa).

Residues 160-162, serine 185, and isoleucine 228 each bind NADP(+); that span reads NRS.

The protein belongs to the tetrahydrofolate dehydrogenase/cyclohydrolase family. As to quaternary structure, homodimer.

The enzyme catalyses (6R)-5,10-methylene-5,6,7,8-tetrahydrofolate + NADP(+) = (6R)-5,10-methenyltetrahydrofolate + NADPH. The catalysed reaction is (6R)-5,10-methenyltetrahydrofolate + H2O = (6R)-10-formyltetrahydrofolate + H(+). It participates in one-carbon metabolism; tetrahydrofolate interconversion. Catalyzes the oxidation of 5,10-methylenetetrahydrofolate to 5,10-methenyltetrahydrofolate and then the hydrolysis of 5,10-methenyltetrahydrofolate to 10-formyltetrahydrofolate. The chain is Bifunctional protein FolD from Cenarchaeum symbiosum (strain A).